Consider the following 202-residue polypeptide: Ribosome biogenesis regulatory protein homolog (202 aa).

Residues 82–103 (TLPPPTTPLPREKPVPQPKPET) form a disordered region.

It belongs to the RRS1 family. In terms of assembly, component of a hexameric 5S RNP precursor complex, composed of 5S RNA, RRS1, RPF2, RPL5, RPL11 and SYO1; this complex acts as a precursor for ribosome assembly.

The protein resides in the nucleus. Involved in ribosomal large subunit assembly. This chain is Ribosome biogenesis regulatory protein homolog, found in Chaetomium thermophilum (strain DSM 1495 / CBS 144.50 / IMI 039719) (Thermochaetoides thermophila).